The sequence spans 219 residues: Isovaleryl-homoserine lactone synthase (219 aa).

It belongs to the autoinducer synthase family.

It catalyses the reaction 3-methylbutanoyl-CoA + S-adenosyl-L-methionine = N-isovaleryl-L-homoserine lactone + S-methyl-5'-thioadenosine + CoA + H(+). Catalyzes the synthesis of IV-HSL (isovaleryl-homoserine lactone), a quorum-sensing (QS) autoinducer molecule which binds to BjaR1 transcriptional regulator to activate expression of QS-dependent genes. Is active with isovaleryl-CoA but cannot use isovaleryl-ACP as acyl donor. The protein is Isovaleryl-homoserine lactone synthase (bjaI) of Bradyrhizobium diazoefficiens (strain JCM 10833 / BCRC 13528 / IAM 13628 / NBRC 14792 / USDA 110).